We begin with the raw amino-acid sequence, 190 residues long: Protein GrpE (190 aa).

Positions 1-31 are enriched in polar residues; it reads MTETPNTSSEEIQTSEPSSDNELQTLQQENA. Positions 1–34 are disordered; it reads MTETPNTSSEEIQTSEPSSDNELQTLQQENANLK.

The protein belongs to the GrpE family. Homodimer.

The protein localises to the cytoplasm. Its function is as follows. Participates actively in the response to hyperosmotic and heat shock by preventing the aggregation of stress-denatured proteins, in association with DnaK and GrpE. It is the nucleotide exchange factor for DnaK and may function as a thermosensor. Unfolded proteins bind initially to DnaJ; upon interaction with the DnaJ-bound protein, DnaK hydrolyzes its bound ATP, resulting in the formation of a stable complex. GrpE releases ADP from DnaK; ATP binding to DnaK triggers the release of the substrate protein, thus completing the reaction cycle. Several rounds of ATP-dependent interactions between DnaJ, DnaK and GrpE are required for fully efficient folding. The sequence is that of Protein GrpE from Chlamydia muridarum (strain MoPn / Nigg).